Here is a 333-residue protein sequence, read N- to C-terminus: Cytosolic sulfotransferase 10 (333 aa).

76–81 (KSGTTW) lines the 3'-phosphoadenylyl sulfate pocket. The active-site Proton acceptor is the His-146. 3'-phosphoadenylyl sulfate contacts are provided by residues Arg-168, Ser-176, Tyr-234, and 299–301 (RKG).

Belongs to the sulfotransferase 1 family. Expressed in roots.

Its subcellular location is the cytoplasm. Its function is as follows. Sulfotransferase that utilizes 3'-phospho-5'-adenylyl sulfate (PAPS) as sulfonate donor to specifically catalyze the sulfate conjugation of brassinosteroids, including castasterone (CS), brassinolide (BL), related 24-epimers, and the naturally occurring (22R, 23R)-28-homobrassinosteroids. No activity on phenolic acids, desulfo-glucosinolates, flavonoids, steroids, gibberellic acids, cytokinins, phenylpropanoids, hydroxyjasmonates and coumarins. The protein is Cytosolic sulfotransferase 10 (SOT10) of Arabidopsis thaliana (Mouse-ear cress).